A 201-amino-acid polypeptide reads, in one-letter code: Translation initiation factor IF-3 (201 aa).

The protein belongs to the IF-3 family. Monomer.

The protein localises to the cytoplasm. In terms of biological role, IF-3 binds to the 30S ribosomal subunit and shifts the equilibrium between 70S ribosomes and their 50S and 30S subunits in favor of the free subunits, thus enhancing the availability of 30S subunits on which protein synthesis initiation begins. The polypeptide is Translation initiation factor IF-3 (Prochlorococcus marinus (strain SARG / CCMP1375 / SS120)).